The chain runs to 260 residues: Carbonic anhydrase 3 (260 aa).

Alanine 2 bears the N-acetylalanine mark. Positions 3–259 (KEWGYASHNG…VKGRVVRASF (257 aa)) constitute an Alpha-carbonic anhydrase domain. Phosphoserine occurs at positions 29, 43, 48, 50, and 55. The interval 64 to 67 (KTCR) is involved in proton transfer. Threonine 73 bears the Phosphothreonine mark. Zn(2+) contacts are provided by histidine 94, histidine 96, and histidine 119. Tyrosine 127 is modified (phosphotyrosine). Threonine 129 and threonine 176 each carry phosphothreonine. Cysteine 182 and cysteine 187 each carry S-glutathionyl cysteine. 198–199 (TT) serves as a coordination point for substrate. Threonine 216 bears the Phosphothreonine mark. Phosphoserine is present on serine 219.

This sequence belongs to the alpha-carbonic anhydrase family. Zn(2+) serves as cofactor. S-thiolated both by thiol-disulfide exchange with glutathione disulfide and by oxyradical-initiated S-thiolation with reduced glutathione. Post-translationally, S-glutathionylated in hepatocytes under oxidative stress. As to expression, expressed at lower levels in adipose tissue from animals that were either genetically obese or had experimentally induced obesity.

The protein resides in the cytoplasm. The catalysed reaction is hydrogencarbonate + H(+) = CO2 + H2O. Its activity is regulated as follows. Inhibited by acetazolamide. In terms of biological role, reversible hydration of carbon dioxide. The sequence is that of Carbonic anhydrase 3 from Mus musculus (Mouse).